A 192-amino-acid polypeptide reads, in one-letter code: UPF0316 protein SSP0880 (192 aa).

A run of 3 helical transmembrane segments spans residues 8–28 (PWLM…CLTM), 40–60 (VAAI…GMVM), and 66–86 (IQNV…GMKI).

The protein belongs to the UPF0316 family.

It is found in the cell membrane. This chain is UPF0316 protein SSP0880, found in Staphylococcus saprophyticus subsp. saprophyticus (strain ATCC 15305 / DSM 20229 / NCIMB 8711 / NCTC 7292 / S-41).